The following is a 472-amino-acid chain: Major capsid protein (472 aa).

The protein belongs to the phi29 phage major capsid protein family.

It is found in the virion. Functionally, assembles to form a prolate capsid of about 45x54 nm, with a T=3, Q=5 symmetry. The sequence is that of Major capsid protein (8) from Bacillus phage GA-1 (Bacteriophage GA-1).